A 384-amino-acid chain; its full sequence is D-galactosamine-6-phosphate deaminase AgaS (384 aa).

SIS domains lie at 45–197 and 215–364; these read LEPL…SQTF and SEGV…PDTP.

This sequence belongs to the SIS family. AgaS subfamily.

It carries out the reaction D-galactosamine 6-phosphate + H2O = D-tagatopyranose 1-phosphate + NH4(+). In terms of biological role, catalyzes the isomerization-deamination of galactosamine 6-phosphate to form tagatofuranose 6-phosphate and ammonium ion. In Escherichia coli O157:H7, this protein is D-galactosamine-6-phosphate deaminase AgaS.